A 63-amino-acid polypeptide reads, in one-letter code: Transmembrane protein ZNF593OS (63 aa).

A helical membrane pass occupies residues 30 to 50 (LAGVVATVLAVLGLGGSCYAV).

It localises to the membrane. The polypeptide is Transmembrane protein ZNF593OS (Homo sapiens (Human)).